A 312-amino-acid chain; its full sequence is Adenylyl-sulfate kinase, chloroplastic (312 aa).

An ATP-binding site is contributed by 142–149; sequence GLSGSGKS. Catalysis depends on serine 216, which acts as the Phosphoserine intermediate.

It belongs to the APS kinase family.

The protein localises to the plastid. Its subcellular location is the chloroplast. The catalysed reaction is adenosine 5'-phosphosulfate + ATP = 3'-phosphoadenylyl sulfate + ADP + H(+). It participates in sulfur metabolism; hydrogen sulfide biosynthesis; sulfite from sulfate: step 2/3. Catalyzes the synthesis of activated sulfate. The protein is Adenylyl-sulfate kinase, chloroplastic (AKN) of Catharanthus roseus (Madagascar periwinkle).